The following is a 375-amino-acid chain: 23S rRNA (uracil(747)-C(5))-methyltransferase RlmC (375 aa).

The [4Fe-4S] cluster site is built by Cys-3, Cys-11, Cys-14, and Cys-87. Positions 212, 241, 262, and 307 each coordinate S-adenosyl-L-methionine. Cys-334 functions as the Nucleophile in the catalytic mechanism.

Belongs to the class I-like SAM-binding methyltransferase superfamily. RNA M5U methyltransferase family. RlmC subfamily.

It carries out the reaction uridine(747) in 23S rRNA + S-adenosyl-L-methionine = 5-methyluridine(747) in 23S rRNA + S-adenosyl-L-homocysteine + H(+). Functionally, catalyzes the formation of 5-methyl-uridine at position 747 (m5U747) in 23S rRNA. This Salmonella arizonae (strain ATCC BAA-731 / CDC346-86 / RSK2980) protein is 23S rRNA (uracil(747)-C(5))-methyltransferase RlmC.